A 598-amino-acid chain; its full sequence is (+)-bornyl diphosphate synthase, chloroplastic (598 aa).

The transit peptide at M1–I54 directs the protein to the chloroplast. Position 314 (R314) interacts with substrate. Residues D351 and D355 each contribute to the Mg(2+) site. Positions D351–D355 match the DDXXD motif motif. R493 lines the substrate pocket. 3 residues coordinate Mg(2+): D496, T500, and E504. T500 serves as a coordination point for substrate. K512 contacts substrate.

Belongs to the terpene synthase family. As to quaternary structure, homodimer. Mg(2+) serves as cofactor.

It localises to the plastid. The protein resides in the chloroplast. It carries out the reaction (2E)-geranyl diphosphate = (2S,4R)-bornyl diphosphate. The enzyme catalyses (2E)-geranyl diphosphate = (1R,4S)-camphene + diphosphate. The catalysed reaction is (2E)-geranyl diphosphate = (1R,5R)-alpha-pinene + diphosphate. The protein operates within terpene metabolism; (R)-camphor biosynthesis. Functionally, catalyzes the formation of the (+)-camphor precursor (+)-bornyl diphosphate from geranyl diphosphate. The enzyme also produces significant amounts of (+)-alpha-pinene, (+)-camphene, and (+-)-limonene. The chain is (+)-bornyl diphosphate synthase, chloroplastic from Salvia officinalis (Sage).